The chain runs to 445 residues: Ribosomal protein uS12 methylthiotransferase RimO (445 aa).

The 116-residue stretch at 4-119 (IKVALVSLGC…LLESIKVFLK (116 aa)) folds into the MTTase N-terminal domain. Residues Cys13, Cys48, Cys82, Cys156, Cys160, and Cys163 each coordinate [4Fe-4S] cluster. The Radical SAM core domain occupies 142–372 (TTPTYTAYVR…MILQQSISKD (231 aa)). The TRAM domain occupies 375-441 (KEKIGKTYEV…EYDLIGVVYN (67 aa)).

This sequence belongs to the methylthiotransferase family. RimO subfamily. Requires [4Fe-4S] cluster as cofactor.

It localises to the cytoplasm. It carries out the reaction L-aspartate(89)-[ribosomal protein uS12]-hydrogen + (sulfur carrier)-SH + AH2 + 2 S-adenosyl-L-methionine = 3-methylsulfanyl-L-aspartate(89)-[ribosomal protein uS12]-hydrogen + (sulfur carrier)-H + 5'-deoxyadenosine + L-methionine + A + S-adenosyl-L-homocysteine + 2 H(+). Functionally, catalyzes the methylthiolation of an aspartic acid residue of ribosomal protein uS12. This Clostridium botulinum (strain ATCC 19397 / Type A) protein is Ribosomal protein uS12 methylthiotransferase RimO.